A 175-amino-acid polypeptide reads, in one-letter code: Nucleoside-triphosphatase THEP1 (175 aa).

ATP is bound by residues 16–23 and 103–110; these read GMPGVGKT and VAFIDEIG.

This sequence belongs to the THEP1 NTPase family.

The enzyme catalyses a ribonucleoside 5'-triphosphate + H2O = a ribonucleoside 5'-diphosphate + phosphate + H(+). Its function is as follows. Has nucleotide phosphatase activity towards ATP, GTP, CTP, TTP and UTP. May hydrolyze nucleoside diphosphates with lower efficiency. This chain is Nucleoside-triphosphatase THEP1, found in Pyrobaculum calidifontis (strain DSM 21063 / JCM 11548 / VA1).